We begin with the raw amino-acid sequence, 201 residues long: Lipopolysaccharide core heptose(II)-phosphate phosphatase (201 aa).

Positions 1-35 are cleaved as a signal peptide; that stretch reads MLAFTLRFIKNKRYLATLAGALVIIAGLTSQHAWS.

This sequence belongs to the phosphoglycerate mutase family. Ais subfamily.

Its subcellular location is the periplasm. It participates in bacterial outer membrane biogenesis; lipopolysaccharide metabolism. In terms of biological role, catalyzes the dephosphorylation of heptose(II) of the outer membrane lipopolysaccharide core. This chain is Lipopolysaccharide core heptose(II)-phosphate phosphatase, found in Salmonella paratyphi A (strain AKU_12601).